A 186-amino-acid polypeptide reads, in one-letter code: Peptide deformylase (186 aa).

2 residues coordinate Fe cation: Cys-99 and His-141. The active site involves Glu-142. His-145 contacts Fe cation.

It belongs to the polypeptide deformylase family. The cofactor is Fe(2+).

The catalysed reaction is N-terminal N-formyl-L-methionyl-[peptide] + H2O = N-terminal L-methionyl-[peptide] + formate. Functionally, removes the formyl group from the N-terminal Met of newly synthesized proteins. Requires at least a dipeptide for an efficient rate of reaction. N-terminal L-methionine is a prerequisite for activity but the enzyme has broad specificity at other positions. The chain is Peptide deformylase from Chlamydia caviae (strain ATCC VR-813 / DSM 19441 / 03DC25 / GPIC) (Chlamydophila caviae).